We begin with the raw amino-acid sequence, 122 residues long: Large ribosomal subunit protein uL14 (122 aa).

This sequence belongs to the universal ribosomal protein uL14 family. Part of the 50S ribosomal subunit. Forms a cluster with proteins L3 and L19. In the 70S ribosome, L14 and L19 interact and together make contacts with the 16S rRNA in bridges B5 and B8.

In terms of biological role, binds to 23S rRNA. Forms part of two intersubunit bridges in the 70S ribosome. The chain is Large ribosomal subunit protein uL14 from Enterococcus faecalis (strain ATCC 700802 / V583).